The chain runs to 219 residues: Ribosomal RNA large subunit methyltransferase E (219 aa).

Positions 60, 62, 80, 96, and 120 each coordinate S-adenosyl-L-methionine. K160 acts as the Proton acceptor in catalysis.

This sequence belongs to the class I-like SAM-binding methyltransferase superfamily. RNA methyltransferase RlmE family.

Its subcellular location is the cytoplasm. It carries out the reaction uridine(2552) in 23S rRNA + S-adenosyl-L-methionine = 2'-O-methyluridine(2552) in 23S rRNA + S-adenosyl-L-homocysteine + H(+). Functionally, specifically methylates the uridine in position 2552 of 23S rRNA at the 2'-O position of the ribose in the fully assembled 50S ribosomal subunit. The sequence is that of Ribosomal RNA large subunit methyltransferase E from Acidithiobacillus ferrooxidans (strain ATCC 23270 / DSM 14882 / CIP 104768 / NCIMB 8455) (Ferrobacillus ferrooxidans (strain ATCC 23270)).